Here is a 419-residue protein sequence, read N- to C-terminus: Synaptic vesicle membrane protein VAT-1 homolog-like (419 aa).

Positions 1 to 25 (MAKEGVEKAEETEQMIEKEAGKEPA) are enriched in basic and acidic residues. Disordered stretches follow at residues 1 to 36 (MAKE…SHRL) and 384 to 419 (PTPL…PFIQ). A Phosphoserine modification is found at serine 392. Threonine 393 and threonine 395 each carry phosphothreonine. Residue serine 396 is modified to Phosphoserine. Acidic residues predominate over residues 397–407 (EAGEEEEDHEG). Residues 408–419 (DSENKERMPFIQ) show a composition bias toward basic and acidic residues.

The protein belongs to the zinc-containing alcohol dehydrogenase family. Quinone oxidoreductase subfamily. As to expression, detected in skin fibroblasts.

The polypeptide is Synaptic vesicle membrane protein VAT-1 homolog-like (VAT1L) (Homo sapiens (Human)).